Here is a 607-residue protein sequence, read N- to C-terminus: ENTH domain-containing protein 1 (607 aa).

The ENTH domain maps to N9–R141. A coiled-coil region spans residues E543–N574.

The sequence is that of ENTH domain-containing protein 1 (ENTHD1) from Homo sapiens (Human).